A 274-amino-acid chain; its full sequence is Acyl-[acyl-carrier-protein]--UDP-N-acetylglucosamine O-acyltransferase (274 aa).

It belongs to the transferase hexapeptide repeat family. LpxA subfamily. Homotrimer.

It localises to the cytoplasm. It catalyses the reaction a (3R)-hydroxyacyl-[ACP] + UDP-N-acetyl-alpha-D-glucosamine = a UDP-3-O-[(3R)-3-hydroxyacyl]-N-acetyl-alpha-D-glucosamine + holo-[ACP]. Its pathway is glycolipid biosynthesis; lipid IV(A) biosynthesis; lipid IV(A) from (3R)-3-hydroxytetradecanoyl-[acyl-carrier-protein] and UDP-N-acetyl-alpha-D-glucosamine: step 1/6. Functionally, involved in the biosynthesis of lipid A, a phosphorylated glycolipid that anchors the lipopolysaccharide to the outer membrane of the cell. This is Acyl-[acyl-carrier-protein]--UDP-N-acetylglucosamine O-acyltransferase from Bartonella henselae (strain ATCC 49882 / DSM 28221 / CCUG 30454 / Houston 1) (Rochalimaea henselae).